A 314-amino-acid chain; its full sequence is GTPase Era (314 aa).

The 169-residue stretch at 21-189 folds into the Era-type G domain; sequence KSGFVGIIGR…QKTLINLLEP (169 aa). The interval 29–36 is G1; it reads GRPNVGKS. GTP is bound at residue 29–36; the sequence is GRPNVGKS. Residues 55–59 form a G2 region; that stretch reads QTTRN. The segment at 76 to 79 is G3; that stretch reads DTPG. Residues 76–80 and 138–141 each bind GTP; these read DTPGI and NKSD. The segment at 138–141 is G4; that stretch reads NKSD. The G5 stretch occupies residues 168–170; sequence FSA. The KH type-2 domain occupies 212–296; that stretch reads IREQILQQTR…YLQLFVKVEP (85 aa).

Belongs to the TRAFAC class TrmE-Era-EngA-EngB-Septin-like GTPase superfamily. Era GTPase family. As to quaternary structure, monomer.

It is found in the cytoplasm. The protein resides in the cell inner membrane. An essential GTPase that binds both GDP and GTP, with rapid nucleotide exchange. Plays a role in 16S rRNA processing and 30S ribosomal subunit biogenesis and possibly also in cell cycle regulation and energy metabolism. The sequence is that of GTPase Era from Rippkaea orientalis (strain PCC 8801 / RF-1) (Cyanothece sp. (strain PCC 8801)).